Here is a 66-residue protein sequence, read N- to C-terminus: U1-theraphotoxin-Cg1d 2 (66 aa).

Positions 1–21 (MKMSALFPIFGLPLLFCNSFA) are cleaved as a signal peptide. A propeptide spanning residues 22-29 (AELKATGR) is cleaved from the precursor. 3 disulfide bridges follow: Cys-31–Cys-46, Cys-38–Cys-51, and Cys-45–Cys-58. Pro-63 is modified (proline amide).

This sequence belongs to the neurotoxin 10 (Hwtx-1) family. 46 (Jztx-7/10/12) subfamily. As to expression, expressed by the venom gland.

It localises to the secreted. Functionally, probable ion channel inhibitor. The sequence is that of U1-theraphotoxin-Cg1d 2 from Chilobrachys guangxiensis (Chinese earth tiger tarantula).